The chain runs to 221 residues: Octanoyltransferase (221 aa).

One can recognise a BPL/LPL catalytic domain in the interval 29 to 208 (DEIPDTCLLL…RLTEFLLPAR (180 aa)). Residues 67–74 (RGGRITWH), 138–140 (AIG), and 151–153 (GFA) contribute to the substrate site. C169 serves as the catalytic Acyl-thioester intermediate.

Belongs to the LipB family.

It localises to the cytoplasm. The catalysed reaction is octanoyl-[ACP] + L-lysyl-[protein] = N(6)-octanoyl-L-lysyl-[protein] + holo-[ACP] + H(+). Its pathway is protein modification; protein lipoylation via endogenous pathway; protein N(6)-(lipoyl)lysine from octanoyl-[acyl-carrier-protein]: step 1/2. Catalyzes the transfer of endogenously produced octanoic acid from octanoyl-acyl-carrier-protein onto the lipoyl domains of lipoate-dependent enzymes. Lipoyl-ACP can also act as a substrate although octanoyl-ACP is likely to be the physiological substrate. The sequence is that of Octanoyltransferase from Acidothermus cellulolyticus (strain ATCC 43068 / DSM 8971 / 11B).